The chain runs to 858 residues: MLQTKDLIWTLFFLGTAVSLQVDIVPSQGEISVGESKFFLCQVAGDAKDKDISWFSPNGEKLTPNQQRISVVWNDDSSSTLTIYNANIDDAGIYKCVVTGEDGSESEATVNVKIFQKLMFKNAPTPQEFREGEDAVIVCDVVSSLPPTIIWKHKGRDVILKKDVRFIVLSNNYLQIRGIKKTDEGTYRCEGRILARGEINFKDIQVIVNVPPTIQARQNIVNATANLGQSVTLVCDAEGFPEPTMSWTKDGEQIEQEEDDEKYIFSDDSSQLTIKKVDKNDEAEYICIAENKAGEQDATIHLKVFAKPKITYVENQTAMELEEQVTLTCEASGDPIPSITWRTSTRNISSEEKASWTRPEKQETLDGHMVVRSHARVSSLTLKSIQYTDAGEYICTASNTIGQDSQSMYLEVQYAPKLQGPVAVYTWEGNQVNITCEVFAYPSATISWFRDGQLLPSSNYSNIKIYNTPSASYLEVTPDSENDFGNYNCTAVNRIGQESLEFILVQADTPSSPSIDQVEPYSSTAQVQFDEPEATGGVPILKYKAEWRAVGEEVWHSKWYDAKEASMEGIVTIVGLKPETTYAVRLAALNGKGLGEISAASEFKTQPVQGEPSAPKLEGQMGEDGNSIKVNLIKQDDGGSPIRHYLVRYRALSSEWKPEIRLPSGSDHVMLKSLDWNAEYEVYVVAENQQGKSKAAHFVFRTSAQPTAIPANGSPTSGLSTGAIVGILIVIFVLLLVVVDITCYFLNKCGLFMCIAVNLCGKAGPGAKGKDMEEGKAAFSKDESKEPIVEVRTEEERTPNHDGGKHTEPNETTPLTEPEKGPVEAKPECQETETKPAPAEVKTVPNDATQTKENESKA.

The first 19 residues, 1–19 (MLQTKDLIWTLFFLGTAVS), serve as a signal peptide directing secretion. 5 consecutive Ig-like C2-type domains span residues 20-111 (LQVD…ATVN), 116-205 (QKLM…KDIQ), 212-301 (PTIQ…ATIH), 308-413 (PKIT…LEVQ), and 416-501 (PKLQ…ESLE). Residues 20–718 (LQVDIVPSQG…IPANGSPTSG (699 aa)) lie on the Extracellular side of the membrane. 2 cysteine pairs are disulfide-bonded: C41–C96 and C139–C189. A glycan (N-linked (GlcNAc...) asparagine) is linked at N222. An intrachain disulfide couples C235 to C287. N315, N347, N433, N459, and N488 each carry an N-linked (GlcNAc...) asparagine glycan. C329 and C395 form a disulfide bridge. The cysteines at positions 436 and 489 are disulfide-linked. Fibronectin type-III domains follow at residues 509–608 (TPSS…TQPV) and 611–706 (EPSA…SAQP). A lipid anchor (GPI-anchor amidated asparagine) is attached at P706. The chain crosses the membrane as a helical span at residues 719-739 (LSTGAIVGILIVIFVLLLVVV). Residues 740-858 (DITCYFLNKC…TQTKENESKA (119 aa)) lie on the Cytoplasmic side of the membrane. The GPI-anchor amidated asparagine moiety is linked to residue I741. The tract at residues 766–858 (GAKGKDMEEG…TQTKENESKA (93 aa)) is disordered. 2 stretches are compositionally biased toward basic and acidic residues: residues 768–809 (KGKD…HTEP) and 817–834 (EPEK…ETET). S780 and S784 each carry phosphoserine.

As to quaternary structure, (Microbial infection) Interacts with rabies virus glycoprotein. In terms of assembly, (Microbial infection) Interacts with Zika virus envelope protein E. Interacts with MDK. Found in a complex with SLC39A6, SLC39A10 and with NCAM1; this complex controls NCAM1 phosphorylation and integration into focal adhesion complexes during epithelial-tomesenchymal transition. Interacts with synaptic plasticity regulator PANTS. Polysialylated at Asn-459 and Asn-488 by ST8SIA2 and ST8SIA4. Polysialylation modulates cell interactions by confering both attractive and repulsive properties that are highly regulated by ST8SIA2 and ST8SIA4. Polysialylation is formed on a-2,3-linked sialic acid of core glycans.

The protein resides in the cell membrane. Its subcellular location is the secreted. This protein is a cell adhesion molecule involved in neuron-neuron adhesion, neurite fasciculation, outgrowth of neurites, etc. Its function is as follows. (Microbial infection) Acts as a receptor for rabies virus. Functionally, (Microbial infection) Acts as a receptor for Zika virus. The protein is Neural cell adhesion molecule 1 of Homo sapiens (Human).